Here is a 747-residue protein sequence, read N- to C-terminus: Cyclic di-GMP phosphodiesterase PdeF (747 aa).

The Periplasmic portion of the chain corresponds to methionine 1 to tryptophan 14. Residues tryptophan 15 to alanine 36 form a helical membrane-spanning segment. The Cytoplasmic segment spans residues histidine 37–glutamate 42. The helical transmembrane segment at valine 43–leucine 65 threads the bilayer. Residues proline 66 to glutamate 79 are Periplasmic-facing. The helical transmembrane segment at leucine 80–glycine 102 threads the bilayer. Residues tyrosine 103 to glutamine 128 lie on the Cytoplasmic side of the membrane. A helical membrane pass occupies residues isoleucine 129 to serine 151. Residues arginine 152–threonine 165 are Periplasmic-facing. The helical transmembrane segment at leucine 166–arginine 188 threads the bilayer. The Cytoplasmic portion of the chain corresponds to valine 189–glutamate 215. A helical transmembrane segment spans residues phenylalanine 216–asparagine 235. Residues glutamate 236 to threonine 239 are Periplasmic-facing. Residues isoleucine 240–methionine 259 traverse the membrane as a helical segment. At arginine 260–leucine 265 the chain is on the cytoplasmic side. Residues isoleucine 266–isoleucine 285 traverse the membrane as a helical segment. Over proline 286–glutamine 294 the chain is Periplasmic. Residues leucine 295–threonine 317 form a helical membrane-spanning segment. Residues arginine 318 to alanine 747 lie on the Cytoplasmic side of the membrane. The 252-residue stretch at lysine 493–arginine 744 folds into the EAL domain.

It depends on Mg(2+) as a cofactor. Mn(2+) is required as a cofactor.

It is found in the cell inner membrane. The catalysed reaction is 3',3'-c-di-GMP + H2O = 5'-phosphoguanylyl(3'-&gt;5')guanosine + H(+). Inhibited by pGpG. Functionally, phosphodiesterase (PDE) that catalyzes the hydrolysis of cyclic-di-GMP (c-di-GMP) to 5'-pGpG. Truncated proteins consisting of the GGDEF/EAL domains (residues 319-747) or of the EAL domain alone (481-747) have c-di-GMP phosphodiesterase activity. They do not have diguanylate cyclase activity. Cyclic-di-GMP is a second messenger which controls cell surface-associated traits in bacteria. This is Cyclic di-GMP phosphodiesterase PdeF from Escherichia coli (strain K12).